A 354-amino-acid polypeptide reads, in one-letter code: Protein RecA (354 aa).

67-74 (GPESSGKT) serves as a coordination point for ATP.

The protein belongs to the RecA family.

The protein resides in the cytoplasm. Can catalyze the hydrolysis of ATP in the presence of single-stranded DNA, the ATP-dependent uptake of single-stranded DNA by duplex DNA, and the ATP-dependent hybridization of homologous single-stranded DNAs. It interacts with LexA causing its activation and leading to its autocatalytic cleavage. This Pasteurella multocida (strain Pm70) protein is Protein RecA.